A 574-amino-acid polypeptide reads, in one-letter code: Sulfate adenylyltransferase (574 aa).

Positions 1–169 are N-terminal; the sequence is MSNPPHGGVL…VEAINKLNHY (169 aa). The segment at 170–394 is catalytic; it reads DYVALRYTPA…LRESSRPRST (225 aa). Position 197 (Gln-197) interacts with sulfate. Residues 197–200 and 291–294 each bind ATP; these read QTRN and GRDH. Residues Thr-198, Arg-199, and Asn-200 contribute to the active site. Arg-199 contacts sulfate. Ala-295 serves as a coordination point for sulfate. Val-333 is a binding site for ATP. The tract at residues 395–574 is allosteric regulation domain; adenylyl-sulfate kinase-like; sequence QGFTIFLTGY…LETEGFFDRA (180 aa). 3'-phosphoadenylyl sulfate is bound by residues 434 to 437, Arg-451, 477 to 478, and Arg-516; these read DTVR and IA.

In the N-terminal section; belongs to the sulfate adenylyltransferase family. The protein in the C-terminal section; belongs to the APS kinase family. In terms of assembly, homohexamer. Dimer of trimers.

The protein resides in the cytoplasm. The catalysed reaction is sulfate + ATP + H(+) = adenosine 5'-phosphosulfate + diphosphate. The protein operates within sulfur metabolism; hydrogen sulfide biosynthesis; sulfite from sulfate: step 1/3. Its activity is regulated as follows. Allosterically inhibited by 3'-phosphoadenosine 5'-phosphosulfate (PAPS). In terms of biological role, catalyzes the first intracellular reaction of sulfate assimilation, forming adenosine-5'-phosphosulfate (APS) from inorganic sulfate and ATP. Plays an important role in sulfate activation as a component of the biosynthesis pathway of sulfur-containing amino acids. The protein is Sulfate adenylyltransferase of Aspergillus clavatus (strain ATCC 1007 / CBS 513.65 / DSM 816 / NCTC 3887 / NRRL 1 / QM 1276 / 107).